Consider the following 157-residue polypeptide: Peptide methionine sulfoxide reductase MsrA (157 aa).

Residue cysteine 10 is part of the active site.

Belongs to the MsrA Met sulfoxide reductase family.

The enzyme catalyses L-methionyl-[protein] + [thioredoxin]-disulfide + H2O = L-methionyl-(S)-S-oxide-[protein] + [thioredoxin]-dithiol. The catalysed reaction is [thioredoxin]-disulfide + L-methionine + H2O = L-methionine (S)-S-oxide + [thioredoxin]-dithiol. Functionally, has an important function as a repair enzyme for proteins that have been inactivated by oxidation. Catalyzes the reversible oxidation-reduction of methionine sulfoxide in proteins to methionine. This is Peptide methionine sulfoxide reductase MsrA from Clostridium perfringens (strain 13 / Type A).